A 152-amino-acid chain; its full sequence is Nucleoplasmin-like protein (152 aa).

Over residues 109–128 the composition is skewed to acidic residues; that stretch reads EVVDMEEDDEEDDVAEDEED. A disordered region spans residues 109 to 152; that stretch reads EVVDMEEDDEEDDVAEDEEDEHPKKRAKIENAADGKNAKNNKKK. The segment covering 136–145 has biased composition (basic and acidic residues); the sequence is KIENAADGKN.

Belongs to the nucleoplasmin family. Decamer formed by two pentameric rings associated in a head-to-head fashion.

Its subcellular location is the nucleus. Its function is as follows. Binds to core histones and functions in the ATP-facilitated assembly of approximately regularly spaced nucleosomal arrays. May participate in parallel with other histone-binding proteins such as NAP-1. In terms of biological role, inactive for chromatin assembly. In vitro it appears to form a high molecular mass aggregate with the core histones. The polypeptide is Nucleoplasmin-like protein (Nlp) (Drosophila melanogaster (Fruit fly)).